Reading from the N-terminus, the 382-residue chain is MSLKEKTQSLFANAFGYPATHTIQAPGRVNLIGEHTDYNDGFVLPCAIDYQTVISCAPRDDRKVRVMAADYENQLDEFSLDAPIIAHENYQWANYVRGVVKHLQLRNNSFGGVDMVISGNVPQGAGLSSSASLEVAVGTVLQQLYHLPLDGAQIALNGQEAENQFVGCNCGIMDQLISALGKKDHALLIDCRSLGTKAVSMPKGVAVVIINSNFKRTLVGSEYNTRREQCETGARFFQQPALRDVTIEEFNAVAHELDPIVAKRVRHILTENARTVEAASALEQGDLKRMGELMAESHASMRDDFEITVPQIDTLVEIVKAVIGDKGGVRMTGGGFGGCIVALIPEELVPAVQQAVAEQYEAKTGIKETFYVCKPSQGAGQC.

Residue 34 to 37 (EHTD) coordinates substrate. An ATP-binding site is contributed by 124 to 130 (GAGLSSS). The Mg(2+) site is built by Ser-130 and Glu-162. Asp-174 functions as the Proton acceptor in the catalytic mechanism. Tyr-223 serves as a coordination point for substrate.

The protein belongs to the GHMP kinase family. GalK subfamily.

It localises to the cytoplasm. It carries out the reaction alpha-D-galactose + ATP = alpha-D-galactose 1-phosphate + ADP + H(+). It functions in the pathway carbohydrate metabolism; galactose metabolism. Catalyzes the transfer of the gamma-phosphate of ATP to D-galactose to form alpha-D-galactose-1-phosphate (Gal-1-P). This chain is Galactokinase, found in Escherichia coli O7:K1 (strain IAI39 / ExPEC).